We begin with the raw amino-acid sequence, 201 residues long: uncharacterized protein (201 aa).

The interval 53-74 (PKKNTAHKNSTTSTVASSGNTT) is disordered. Over residues 59–74 (HKNSTTSTVASSGNTT) the composition is skewed to polar residues. Residues 88–136 (AKRLSHKEVERRRREAISEGIKELANIVPGCEKNKGSILQRTAQYIRSL) form the bHLH domain.

It localises to the nucleus. This is an uncharacterized protein from Schizosaccharomyces pombe (strain 972 / ATCC 24843) (Fission yeast).